The chain runs to 260 residues: Oxidoreductase macE (260 aa).

Belongs to the oxidoreductase OpS7 family.

It functions in the pathway secondary metabolite biosynthesis; terpenoid biosynthesis. Its function is as follows. Oxidoreductase; part of the gene cluster that mediates the biosynthesis of macrophorins, isoprenoid epoxycyclohexenones containing cyclized drimane moieties. The first step of the pathway is the synthesis of 6-methylsalicylic acid (6-MSA) by the polyketide synthase macA. 6-MSA is then converted to m-cresol by the decarboxylase macB. The cytochrome P450 monooxygenase macC then catalyzes the oxidation of m-cresol to toluquinol. Epoxidation of toluquinol is then performed by the short chain dehydrogenase macD, with the help of macE, and a further prenylation by macG leads to 7-deacetoxyyanuthone A. The next step is the hydroxylation of C-22 of 7-deacetoxyyanuthone A by the cytochrome P450 monooxygenase macH to yield 22-deacetylyanuthone A. O-Mevalon transferase macI then attaches mevalon to the hydroxyl group of 22-deacetylyanuthone A to produce yanuthone E. The terpene cyclase macJ catalyzes the cyclization of 22-deacetylyanuthone A to macrophorin A. MacJ is also able to catalyze cyclization of yanuthone E and 7-deacetoxyyanuthone A to their corresponding macrophorins. The macJ products can be further modified by macH and macJ, as well as by the FAD-dependent monooxygenase macF, to produce additional macrophorins, including 4'-oxomacrophorin A, 4'-oxomacrophorin D and 4'-oxomacrophorin E. This chain is Oxidoreductase macE, found in Penicillium terrestre.